Reading from the N-terminus, the 155-residue chain is Ribosome maturation factor RimP (155 aa).

The protein belongs to the RimP family.

The protein localises to the cytoplasm. Its function is as follows. Required for maturation of 30S ribosomal subunits. The polypeptide is Ribosome maturation factor RimP (Prochlorococcus marinus (strain SARG / CCMP1375 / SS120)).